The chain runs to 317 residues: MSEIFEDKTENGKVRPWRERKIENVRYAEYLAILEFKRAHDVRGCGEVLRFRKIGEHLKLYQTWFCHKRLCPLCNWRRSMKNSSQLKQIIAEAVAREPKGRFLFLTLTVKNAHSAEELKVSLRALTKAFNKLTRYKKVTKNLLGYLRSTEITVNEQDGSYNQHLHVLLFVKSSYFKNSNNYLAQAEWAKLWQKALKVDYEPVVHVQAVKANKRKGTDSLQASAEETAKYEVKSADYMTADDERNLVVIKNLEYALAGTRQISYGGLLKQIKQDLKLEDVENGDLVHVGDEDYTKEQMEAAEEVVAKWDFNKQNYFIW.

Tyr-229 lines the DNA pocket.

It belongs to the Gram-positive plasmids replication protein type 1 family.

Functionally, produces a single-strand nick in a specific site of the plasmid, and this nick results in single-strand replication by rolling circle mechanism. This is Protein rep (rep) from Lactiplantibacillus plantarum (Lactobacillus plantarum).